Here is a 363-residue protein sequence, read N- to C-terminus: LIM and cysteine-rich domains protein 1 (363 aa).

Phosphoserine is present on Ser-16. The 108-residue stretch at 99 to 206 folds into the PET domain; that stretch reads MIMTNPIATG…GEVALPGQGG (108 aa). The tract at residues 200–233 is disordered; sequence ALPGQGGLPKEEGKQQEKPEGAETAAPTANGSLG. The span at 208-220 shows a compositional bias: basic and acidic residues; the sequence is PKEEGKQQEKPEG. LIM zinc-binding domains follow at residues 239–304 and 305–363; these read YVCE…SLRP and RCSG…SKRT.

Interacts with beta-dystroglycan. Interacts with GATA1, GATA4 and GATA6. As to expression, highly expressed in both skeletal muscle and cardiac muscle.

The protein localises to the cytoplasm. It is found in the nucleus. In terms of biological role, transcriptional cofactor that restricts GATA6 function by inhibiting DNA-binding, resulting in repression of GATA6 transcriptional activation of downstream target genes. Represses GATA6-mediated trans activation of lung- and cardiac tissue-specific promoters. Inhibits DNA-binding by GATA4 and GATA1 to the cTNC promoter. Plays a critical role in the development of cardiac hypertrophy via activation of calcineurin/nuclear factor of activated T-cells signaling pathway. The protein is LIM and cysteine-rich domains protein 1 (LMCD1) of Sus scrofa (Pig).